The sequence spans 381 residues: Probable glucuronosyltransferase Os04g0103100 (381 aa).

Topologically, residues 1–69 (MASIRRPHSP…HTSFRRPLPR (69 aa)) are cytoplasmic. A disordered region spans residues 21–50 (HLGPFASSSPPSSPLRHSSSSSSPRSAAHH). The segment covering 26–46 (ASSSPPSSPLRHSSSSSSPRS) has biased composition (low complexity). The chain crosses the membrane as a helical; Signal-anchor for type II membrane protein span at residues 70 to 90 (FAAFFLLGSFLGLLHFLSHLP). The Lumenal portion of the chain corresponds to 91–381 (RPLGPIPNPN…TDLDVIIPLK (291 aa)). Residues 96–122 (IPNPNSHHRHRDPFPILQHPHPPSTPH) are disordered. N-linked (GlcNAc...) asparagine glycans are attached at residues asparagine 194 and asparagine 296.

The protein belongs to the glycosyltransferase 43 family.

It is found in the golgi apparatus membrane. In terms of biological role, involved in the synthesis of glucuronoxylan hemicellulose in secondary cell walls. This Oryza sativa subsp. japonica (Rice) protein is Probable glucuronosyltransferase Os04g0103100.